Reading from the N-terminus, the 348-residue chain is GDSL esterase/lipase At4g30140 (348 aa).

Residues 1 to 28 (MVEGESKALWIILATVFAVAAVAPAVHG) form the signal peptide. The active-site Nucleophile is S40. Active-site residues include D316 and H319. N342 is a glycosylation site (N-linked (GlcNAc...) asparagine).

Belongs to the 'GDSL' lipolytic enzyme family.

It localises to the secreted. In Arabidopsis thaliana (Mouse-ear cress), this protein is GDSL esterase/lipase At4g30140.